The primary structure comprises 355 residues: DNA-directed RNA polymerase subunit alpha (355 aa).

Positions 1-248 (MYYDDGIPVF…EQLQPFISSD (248 aa)) are alpha N-terminal domain (alpha-NTD). Residues 267–355 (YDPILLRKVD…ELARQHTDED (89 aa)) are alpha C-terminal domain (alpha-CTD).

This sequence belongs to the RNA polymerase alpha chain family. As to quaternary structure, homodimer. The RNAP catalytic core consists of 2 alpha, 1 beta, 1 beta' and 1 omega subunit. When a sigma factor is associated with the core the holoenzyme is formed, which can initiate transcription.

The catalysed reaction is RNA(n) + a ribonucleoside 5'-triphosphate = RNA(n+1) + diphosphate. Its function is as follows. DNA-dependent RNA polymerase catalyzes the transcription of DNA into RNA using the four ribonucleoside triphosphates as substrates. The protein is DNA-directed RNA polymerase subunit alpha of Wolbachia sp. subsp. Brugia malayi (strain TRS).